The sequence spans 161 residues: Regulator of ribonuclease activity A (161 aa).

Belongs to the RraA family. As to quaternary structure, homotrimer. Binds to both RNA-binding sites in the C-terminal region of Rne and to RhlB.

It is found in the cytoplasm. In terms of biological role, globally modulates RNA abundance by binding to RNase E (Rne) and regulating its endonucleolytic activity. Can modulate Rne action in a substrate-dependent manner by altering the composition of the degradosome. Modulates RNA-binding and helicase activities of the degradosome. This is Regulator of ribonuclease activity A from Shigella flexneri serotype 5b (strain 8401).